Here is an 872-residue protein sequence, read N- to C-terminus: Rho guanine nucleotide exchange factor scd1 (872 aa).

Positions 1–29 are disordered; the sequence is MAYFQDRKTSSRSLPSYINHSTQNLVGPR. Polar residues predominate over residues 11-25; it reads SRSLPSYINHSTQNL. The region spanning 82–198 is the Calponin-homology (CH) domain; that stretch reads DSIHREALNS…TIELLLKKYE (117 aa). Residues 228-402 form the DH domain; the sequence is SGRRVTAELY…VRVANQVNET (175 aa). In terms of domain architecture, PH spans 426–547; the sequence is SLQYFGQLLV…WMSVLNRLLW (122 aa). Disordered regions lie at residues 553-667 and 743-765; these read SPKD…STAS and MKSD…STST. Over residues 560–584 the composition is skewed to polar residues; it reads AASTPANPVYNRSSSQTSKGYNSSD. Phosphoserine is present on Ser-583. Over residues 599–616 the composition is skewed to low complexity; it reads SPTSISSPSSKSSPFTKT. The span at 617-633 shows a compositional bias: basic and acidic residues; sequence TSKDTKSATTTDERPSD. Composition is skewed to low complexity over residues 645–667 and 748–765; these read TSSL…STAS and SLLP…STST. The 88-residue stretch at 772–859 folds into the PB1 domain; it reads TTNVKIRLRL…FELMDPVHNK (88 aa).

As to quaternary structure, scd1, scd2, cdc42, and ras1, in its GTP-bound state, act cooperatively to form a protein complex. Interacts with moe1 and cdc42.

It localises to the nucleus. The protein localises to the cytoplasm. In terms of biological role, required for mating and morphogenesis. May contain a cryptic binding site for cdc42 that is enhanced by binding Ras. Interacts directly with scd2. Promotes the exchange of cdc42-bound GDP by GTP. Involved in septation and stimulates the elongation of conjugation tubes. The sequence is that of Rho guanine nucleotide exchange factor scd1 (scd1) from Schizosaccharomyces pombe (strain 972 / ATCC 24843) (Fission yeast).